Consider the following 429-residue polypeptide: Polypyrimidine tract-binding protein homolog 2 (429 aa).

The residue at position 2 (Ser-2) is an N-acetylserine. RRM domains lie at 18–96, 110–197, and 243–323; these read KVLH…YSNR, GNVL…YSAH, and SNVL…YSRH. The interval 331 to 429 is disordered; that stretch reads NNDRSRDYTM…QHYGGPGPMH (99 aa). The span at 367-381 shows a compositional bias: low complexity; sequence GGSHHQQQQQPQGGW. The span at 382-397 shows a compositional bias: gly residues; sequence VQPGGQGSMGMGGGGH.

The protein localises to the nucleus. Functionally, plays a role in pre-mRNA splicing. Binds to the polypyrimidine tract of introns. May promote the binding of U2 snRNP to pre-mRNA. The polypeptide is Polypyrimidine tract-binding protein homolog 2 (Arabidopsis thaliana (Mouse-ear cress)).